The chain runs to 57 residues: Plasma membrane proteolipid 3 (57 aa).

The chain crosses the membrane as a helical span at residues 34–54 (INILLTILGYLPGIVHALYII).

This sequence belongs to the UPF0057 (PMP3) family.

It is found in the cell membrane. In terms of biological role, plays a role in the regulation of membrane potential. Could mediate a proton leak. The polypeptide is Plasma membrane proteolipid 3 (pmp-1) (Neurospora crassa (strain ATCC 24698 / 74-OR23-1A / CBS 708.71 / DSM 1257 / FGSC 987)).